We begin with the raw amino-acid sequence, 173 residues long: Inorganic pyrophosphatase (173 aa).

Substrate is bound by residues lysine 28, arginine 42, and tyrosine 54. Residues aspartate 64, aspartate 69, and aspartate 101 each coordinate Mg(2+). Residue tyrosine 140 participates in substrate binding.

This sequence belongs to the PPase family. As to quaternary structure, homohexamer. Mg(2+) is required as a cofactor.

It localises to the cytoplasm. The enzyme catalyses diphosphate + H2O = 2 phosphate + H(+). Its function is as follows. Catalyzes the hydrolysis of inorganic pyrophosphate (PPi) forming two phosphate ions. The chain is Inorganic pyrophosphatase from Helicobacter pylori (strain J99 / ATCC 700824) (Campylobacter pylori J99).